Reading from the N-terminus, the 284-residue chain is MNAWNTIYDQFNPIAFSLGSIEVHWYGLAYACAIVTAFYMALRMIQKDPKRFPIERKEFESYFLWAELGIVLGARIGYILIYEPNSGYYLTHFWQIFNPFDSHGNFVGIRGMSYHGGLVGFLIASYLYSRKDLKKLLIYLDLIAISLPLGYVFGRIGNFLNQELVGRIVPKDSHLGQIIGIMVDNELRYPSQLIEAFLEGVIVFLMVMWAKKHTKTHGLLIVVYGLGYSLMRFIAEFYREPDSQMGVYFLNLSMGQILSLFMVIVSLGILLYATKNSKKIKENQ.

7 helical membrane-spanning segments follow: residues 14 to 34 (IAFS…ACAI), 62 to 82 (YFLW…ILIY), 106 to 126 (FVGI…IASY), 136 to 156 (LLIY…FGRI), 190 to 210 (PSQL…VMWA), 218 to 238 (GLLI…AEFY), and 252 to 272 (LSMG…ILLY). Arginine 155 lines the a 1,2-diacyl-sn-glycero-3-phospho-(1'-sn-glycerol) pocket.

Belongs to the Lgt family.

The protein localises to the cell inner membrane. It catalyses the reaction L-cysteinyl-[prolipoprotein] + a 1,2-diacyl-sn-glycero-3-phospho-(1'-sn-glycerol) = an S-1,2-diacyl-sn-glyceryl-L-cysteinyl-[prolipoprotein] + sn-glycerol 1-phosphate + H(+). The protein operates within protein modification; lipoprotein biosynthesis (diacylglyceryl transfer). Its function is as follows. Catalyzes the transfer of the diacylglyceryl group from phosphatidylglycerol to the sulfhydryl group of the N-terminal cysteine of a prolipoprotein, the first step in the formation of mature lipoproteins. The protein is Phosphatidylglycerol--prolipoprotein diacylglyceryl transferase of Helicobacter pylori (strain ATCC 700392 / 26695) (Campylobacter pylori).